Consider the following 283-residue polypeptide: Probable endonuclease 4 (283 aa).

Positions 69, 109, 144, 178, 181, 215, 228, 230, and 260 each coordinate Zn(2+).

The protein belongs to the AP endonuclease 2 family. Zn(2+) is required as a cofactor.

The enzyme catalyses Endonucleolytic cleavage to 5'-phosphooligonucleotide end-products.. Its function is as follows. Endonuclease IV plays a role in DNA repair. It cleaves phosphodiester bonds at apurinic or apyrimidinic (AP) sites, generating a 3'-hydroxyl group and a 5'-terminal sugar phosphate. The sequence is that of Probable endonuclease 4 from Thermosipho melanesiensis (strain DSM 12029 / CIP 104789 / BI429).